A 458-amino-acid chain; its full sequence is Photosystem II CP43 reaction center protein (458 aa).

The next 5 helical transmembrane spans lie at 54 to 78 (LFEV…PHLA), 119 to 140 (LRGP…KDKN), 163 to 185 (KAMF…RVIT), 240 to 260 (RPFN…LSYS), and 276 to 297 (WFNN…ASQA). E352 contributes to the [CaMn4O5] cluster binding site. A helical transmembrane segment spans residues 432–456 (RARAAAAGFEKGIDRKTEPVLSMSD).

This sequence belongs to the PsbB/PsbC family. PsbC subfamily. In terms of assembly, PSII is composed of 1 copy each of membrane proteins PsbA, PsbB, PsbC, PsbD, PsbE, PsbF, PsbH, PsbI, PsbJ, PsbK, PsbL, PsbM, PsbT, PsbX, PsbY, PsbZ, Psb30/Ycf12, peripheral proteins PsbO, CyanoQ (PsbQ), PsbU, PsbV and a large number of cofactors. It forms dimeric complexes. It depends on Binds multiple chlorophylls and provides some of the ligands for the Ca-4Mn-5O cluster of the oxygen-evolving complex. It may also provide a ligand for a Cl- that is required for oxygen evolution. PSII binds additional chlorophylls, carotenoids and specific lipids. as a cofactor.

The protein localises to the cellular thylakoid membrane. One of the components of the core complex of photosystem II (PSII). It binds chlorophyll and helps catalyze the primary light-induced photochemical processes of PSII. PSII is a light-driven water:plastoquinone oxidoreductase, using light energy to abstract electrons from H(2)O, generating O(2) and a proton gradient subsequently used for ATP formation. This is Photosystem II CP43 reaction center protein from Prochlorothrix hollandica.